The primary structure comprises 359 residues: Stearoyl-CoA desaturase (359 aa).

Residues 1–72 (MPAHLLQEEI…EGPKPKLEYV (72 aa)) are Cytoplasmic-facing. Residues 73 to 93 (WRNIILMGLLHLGALYGITLI) traverse the membrane as a helical segment. Asn75 is a substrate binding site. Topologically, residues 94–97 (PTCK) are lumenal. The helical transmembrane segment at 98-118 (IYTFLWVLFYYMMSALGITAG) threads the bilayer. Topologically, residues 119–217 (VHRLWSHRTY…EKLVMFQRRY (99 aa)) are cytoplasmic. The Fe cation site is built by His120 and His125. A Histidine box-1 motif is present at residues 120-125 (HRLWSH). Substrate-binding residues include Asn148, Arg155, and Asp156. Residues His157, His160, and His161 each coordinate Fe cation. Positions 157–161 (HRAHH) match the Histidine box-2 motif. Substrate-binding residues include Arg188 and Lys189. Residue Ser203 is modified to Phosphoserine. The chain crosses the membrane as a helical span at residues 218–237 (YKPGVLLLCFILPTLVPWYL). Over 238-241 (WGET) the chain is Lumenal. Residues 242 to 263 (FQNSLFFATLLRYAVVLNATWL) traverse the membrane as a helical segment. Trp262 is a binding site for substrate. The Cytoplasmic portion of the chain corresponds to 264 to 359 (VNSAAHMYGY…RTGEESCKSG (96 aa)). The Fe cation site is built by His269, His298, His301, and His302. The Histidine box-3 motif lies at 298-302 (HNYHH).

The protein belongs to the fatty acid desaturase type 1 family. The cofactor is Fe(2+).

It localises to the endoplasmic reticulum membrane. The enzyme catalyses octadecanoyl-CoA + 2 Fe(II)-[cytochrome b5] + O2 + 2 H(+) = (9Z)-octadecenoyl-CoA + 2 Fe(III)-[cytochrome b5] + 2 H2O. It catalyses the reaction hexadecanoyl-CoA + 2 Fe(II)-[cytochrome b5] + O2 + 2 H(+) = (9Z)-hexadecenoyl-CoA + 2 Fe(III)-[cytochrome b5] + 2 H2O. Stearoyl-CoA desaturase that utilizes O(2) and electrons from reduced cytochrome b5 to introduce the first double bond into saturated fatty acyl-CoA substrates. Catalyzes the insertion of a cis double bond at the delta-9 position into fatty acyl-CoA substrates including palmitoyl-CoA and stearoyl-CoA. Gives rise to a mixture of 16:1 and 18:1 unsaturated fatty acids. Plays an important role in lipid biosynthesis. Plays an important role in regulating the expression of genes that are involved in lipogenesis and in regulating mitochondrial fatty acid oxidation. Plays an important role in body energy homeostasis. Contributes to the biosynthesis of membrane phospholipids, cholesterol esters and triglycerides. This chain is Stearoyl-CoA desaturase (SCD), found in Capra hircus (Goat).